A 166-amino-acid chain; its full sequence is FMN reductase (NADH) RutF (166 aa).

The protein belongs to the non-flavoprotein flavin reductase family. RutF subfamily.

The catalysed reaction is FMNH2 + NAD(+) = FMN + NADH + 2 H(+). Its function is as follows. Catalyzes the reduction of FMN to FMNH2 which is used to reduce pyrimidine by RutA via the Rut pathway. This Cronobacter sakazakii (strain ATCC BAA-894) (Enterobacter sakazakii) protein is FMN reductase (NADH) RutF.